The chain runs to 175 residues: Large ribosomal subunit protein uL10 (175 aa).

This sequence belongs to the universal ribosomal protein uL10 family. As to quaternary structure, part of the ribosomal stalk of the 50S ribosomal subunit. The N-terminus interacts with L11 and the large rRNA to form the base of the stalk. The C-terminus forms an elongated spine to which L12 dimers bind in a sequential fashion forming a multimeric L10(L12)X complex.

Functionally, forms part of the ribosomal stalk, playing a central role in the interaction of the ribosome with GTP-bound translation factors. This is Large ribosomal subunit protein uL10 from Prochlorococcus marinus (strain MIT 9215).